The following is a 325-amino-acid chain: Large ribosomal subunit protein uL1m (325 aa).

The N-terminal 50 residues, 1-50 (MAAAVRCMGRALIHHQRHSLSKMVYQTSLCSCSVNIRVPNRHFAAATKSA), are a transit peptide targeting the mitochondrion.

Belongs to the universal ribosomal protein uL1 family. As to quaternary structure, component of the mitochondrial large ribosomal subunit (mt-LSU). Mature mammalian 55S mitochondrial ribosomes consist of a small (28S) and a large (39S) subunit. The 28S small subunit contains a 12S ribosomal RNA (12S mt-rRNA) and 30 different proteins. The 39S large subunit contains a 16S rRNA (16S mt-rRNA), a copy of mitochondrial valine transfer RNA (mt-tRNA(Val)), which plays an integral structural role, and 52 different proteins.

The protein localises to the mitochondrion. This chain is Large ribosomal subunit protein uL1m (MRPL1), found in Homo sapiens (Human).